The chain runs to 665 residues: Pre-mRNA-processing factor 39 (665 aa).

A compositionally biased stretch (basic and acidic residues) spans 1 to 11 (MQNSHMEEYRN). The tract at residues 1–28 (MQNSHMEEYRNSDNGSTGNSSEVAVVEH) is disordered. Residues 12–22 (SDNGSTGNSSE) show a composition bias toward polar residues. A Phosphoserine modification is found at Ser-44. HAT repeat units lie at residues 107-139 (NHLMAARKAFDKFFVHYPYCYGYWKKYADLEKR), 141-173 (DNIKQSDEVYRRGLQAIPLSVDLWIHYINFLKE), 181-216 (ETNTTIRGTFEHAVLAAGTDFRSDKLWEMYINWENE), 218-251 (GNLREVTAVYDRILGIPTQLYSHHFQRFKEHVQN), 331-363 (FEEGIKRPYFHVKPLEKAQPKKNWKEYLEFEIE), 365-397 (GTHERVVVLFERCVISCALYEEFWIKYAKYMEN), and 402-434 (GVRHVFSRACTVHLPKKPMAHMLWAAFEEQQGN). Residues 599-622 (QDTLKRKAENGSEEPEEKKAHTED) are compositionally biased toward basic and acidic residues. Positions 599 to 625 (QDTLKRKAENGSEEPEEKKAHTEDLSS) are disordered.

It belongs to the PRP39 family.

The protein localises to the nucleus. Involved in pre-mRNA splicing. This Mus musculus (Mouse) protein is Pre-mRNA-processing factor 39 (Prpf39).